The following is a 146-amino-acid chain: Hemoglobin subunit beta (146 aa).

Val1 carries the post-translational modification N-acetylvaline. In terms of domain architecture, Globin spans 2–146 (HLTAEEKDAV…VANALAHRYH (145 aa)). Ser44 is subject to Phosphoserine. Lys59 carries the post-translational modification N6-acetyllysine. A heme b-binding site is contributed by His63. Lys82 is subject to N6-acetyllysine. His92 provides a ligand contact to heme b. Cys93 is modified (S-nitrosocysteine).

It belongs to the globin family. Heterotetramer of two alpha chains and two beta chains. As to expression, red blood cells.

In terms of biological role, involved in oxygen transport from the lung to the various peripheral tissues. This Hippopotamus amphibius (Hippopotamus) protein is Hemoglobin subunit beta (HBB).